Consider the following 419-residue polypeptide: Multifunctional CCA protein (419 aa).

The ATP site is built by glycine 8 and arginine 11. CTP-binding residues include glycine 8 and arginine 11. Residues aspartate 21 and aspartate 23 each coordinate Mg(2+). Arginine 91, arginine 137, and arginine 140 together coordinate ATP. CTP contacts are provided by arginine 91, arginine 137, and arginine 140. One can recognise an HD domain in the interval 226–327 (TGVHLMMVLD…VRLFDRCDAW (102 aa)).

The protein belongs to the tRNA nucleotidyltransferase/poly(A) polymerase family. Bacterial CCA-adding enzyme type 1 subfamily. Monomer. Can also form homodimers and oligomers. Mg(2+) is required as a cofactor. Ni(2+) serves as cofactor.

The catalysed reaction is a tRNA precursor + 2 CTP + ATP = a tRNA with a 3' CCA end + 3 diphosphate. The enzyme catalyses a tRNA with a 3' CCA end + 2 CTP + ATP = a tRNA with a 3' CCACCA end + 3 diphosphate. Its function is as follows. Catalyzes the addition and repair of the essential 3'-terminal CCA sequence in tRNAs without using a nucleic acid template. Adds these three nucleotides in the order of C, C, and A to the tRNA nucleotide-73, using CTP and ATP as substrates and producing inorganic pyrophosphate. tRNA 3'-terminal CCA addition is required both for tRNA processing and repair. Also involved in tRNA surveillance by mediating tandem CCA addition to generate a CCACCA at the 3' terminus of unstable tRNAs. While stable tRNAs receive only 3'-terminal CCA, unstable tRNAs are marked with CCACCA and rapidly degraded. This Leptothrix cholodnii (strain ATCC 51168 / LMG 8142 / SP-6) (Leptothrix discophora (strain SP-6)) protein is Multifunctional CCA protein.